A 270-amino-acid chain; its full sequence is Putative hydro-lyase Noca_0093 (270 aa).

The protein belongs to the D-glutamate cyclase family.

This is Putative hydro-lyase Noca_0093 from Nocardioides sp. (strain ATCC BAA-499 / JS614).